The primary structure comprises 50 residues: Sperm protamine P1 (50 aa).

2 disulfides stabilise this stretch: C7–C15 and C38–C46.

This sequence belongs to the protamine P1 family. In terms of assembly, cross-linked by interchain disulfide bonds around the DNA-helix. In terms of tissue distribution, testis.

The protein resides in the nucleus. The protein localises to the chromosome. In terms of biological role, protamines substitute for histones in the chromatin of sperm during the haploid phase of spermatogenesis. They compact sperm DNA into a highly condensed, stable and inactive complex. The sequence is that of Sperm protamine P1 (PRM1) from Equus asinus (Donkey).